Here is a 36-residue protein sequence, read N- to C-terminus: RYCPRNPEACYNYCLRTGRPGGYCGGRSRITCFCFR.

3 disulfide bridges follow: cysteine 3–cysteine 24, cysteine 10–cysteine 32, and cysteine 14–cysteine 34.

This sequence belongs to the invertebrate defensin family. Expressed by the venom gland.

It is found in the secreted. Antibacterial peptide mostly active against Gram-positive bacteria. This chain is Tddefensin, found in Tityus discrepans (Venezuelan scorpion).